The chain runs to 154 residues: 2S sulfur-rich seed storage protein 2 (154 aa).

The N-terminal stretch at 1–22 (MAKMSVVAAALLALLVLGQATA) is a signal peptide. The tract at residues 29 to 52 (TTLEEEQEENPRGRSEQQCREQME) is disordered. Over residues 37 to 52 (ENPRGRSEQQCREQME) the composition is skewed to basic and acidic residues. Disulfide bonds link C47/C101, C60/C90, C91/C138, and C103/C145. A propeptide spanning residues 72 to 76 (PYQNP) is cleaved from the precursor. Positions 151–154 (TAWL) are excised as a propeptide.

The protein belongs to the 2S seed storage albumins family. The mature protein consists of a small and a large chain linked by disulfide bonds.

Its function is as follows. This is a 2S seed storage protein. The polypeptide is 2S sulfur-rich seed storage protein 2 (BE2S2) (Bertholletia excelsa (Brazil nut)).